Reading from the N-terminus, the 248-residue chain is Probable transcriptional regulatory protein MYPE8020 (248 aa).

The protein belongs to the TACO1 family.

The protein resides in the cytoplasm. The chain is Probable transcriptional regulatory protein MYPE8020 from Malacoplasma penetrans (strain HF-2) (Mycoplasma penetrans).